The chain runs to 180 residues: Ferric nitrobindin-like protein (180 aa).

The short motif at 21–27 (GRWEGAG) is the GXWXGXG element.

It belongs to the nitrobindin family.

The protein is Ferric nitrobindin-like protein of Kineococcus radiotolerans (strain ATCC BAA-149 / DSM 14245 / SRS30216).